The sequence spans 208 residues: Uridine kinase (208 aa).

Residue 11 to 18 (GGTGSGKS) coordinates ATP.

Belongs to the uridine kinase family.

Its subcellular location is the cytoplasm. The catalysed reaction is uridine + ATP = UMP + ADP + H(+). It carries out the reaction cytidine + ATP = CMP + ADP + H(+). Its pathway is pyrimidine metabolism; CTP biosynthesis via salvage pathway; CTP from cytidine: step 1/3. The protein operates within pyrimidine metabolism; UMP biosynthesis via salvage pathway; UMP from uridine: step 1/1. This Alkaliphilus metalliredigens (strain QYMF) protein is Uridine kinase.